Reading from the N-terminus, the 436-residue chain is Origin recognition complex subunit 4 (436 aa).

The residue at position 7 (Lys-7) is an N6-methyllysine. 67-74 serves as a coordination point for ATP; that stretch reads GPRGSGKT.

It belongs to the ORC4 family. As to quaternary structure, component of ORC, a complex composed of at least 6 subunits: ORC1, ORC2, ORC3, ORC4, ORC5 and ORC6. ORC is regulated in a cell-cycle dependent manner. It is sequentially assembled at the exit from anaphase of mitosis and disassembled as cells enter S phase. Interacts with DBF4. Interacts with POLQ.

Its subcellular location is the nucleus. In terms of biological role, component of the origin recognition complex (ORC) that binds origins of replication. DNA-binding is ATP-dependent. The specific DNA sequences that define origins of replication have not been identified yet. ORC is required to assemble the pre-replication complex necessary to initiate DNA replication. Binds histone H3 and H4 trimethylation marks H3K9me3, H3K27me3 and H4K20me3. This Homo sapiens (Human) protein is Origin recognition complex subunit 4 (ORC4).